We begin with the raw amino-acid sequence, 163 residues long: Peptidyl-prolyl cis-trans isomerase (163 aa).

Positions 17-163 (KTAYATIKTN…IESVVFSSSL (147 aa)) constitute a PPIase cyclophilin-type domain.

This sequence belongs to the cyclophilin-type PPIase family.

The enzyme catalyses [protein]-peptidylproline (omega=180) = [protein]-peptidylproline (omega=0). Its function is as follows. PPIases accelerate the folding of proteins. It catalyzes the cis-trans isomerization of proline imidic peptide bonds in oligopeptides. This is Peptidyl-prolyl cis-trans isomerase (ppiA) from Helicobacter pylori (strain ATCC 700392 / 26695) (Campylobacter pylori).